The following is a 488-amino-acid chain: Probable (S)-N-methylcoclaurine 3'-hydroxylase isozyme 2 (488 aa).

A helical transmembrane segment spans residues 2–21 (EVLSIAIVSFSFLLFLFFIL). Cysteine 427 is a heme binding site.

The protein belongs to the cytochrome P450 family. Heme is required as a cofactor. As to expression, expressed at low levels in roots.

It localises to the endoplasmic reticulum membrane. The protein resides in the microsome membrane. The catalysed reaction is (S)-N-methylcoclaurine + reduced [NADPH--hemoprotein reductase] + O2 = (S)-3'-hydroxy-N-methylcoclaurine + oxidized [NADPH--hemoprotein reductase] + H2O + H(+). It functions in the pathway alkaloid biosynthesis; (S)-reticuline biosynthesis; (S)-reticuline from (S)-norcoclaurine: step 3/4. 3'-hydroxylation of (S)-N-methylcoclaurine. This chain is Probable (S)-N-methylcoclaurine 3'-hydroxylase isozyme 2 (CYP80B2), found in Coptis japonica (Japanese goldthread).